Reading from the N-terminus, the 125-residue chain is N-alpha-acetyltransferase 38, NatC auxiliary subunit (125 aa).

The segment at Met-1 to Arg-42 is disordered. N-acetylalanine is present on Ala-2. The span at Ser-18–Asp-28 shows a compositional bias: low complexity. Residues Ser-22, Ser-25, and Ser-29 each carry the phosphoserine modification. One can recognise a Sm domain in the interval Arg-40–Ser-118.

Belongs to the snRNP Sm proteins family. Component of the N-terminal acetyltransferase C (NatC) complex, which is composed of NAA35, NAA38 and NAA30.

It is found in the cytoplasm. The protein localises to the nucleus. Functionally, auxillary component of the N-terminal acetyltransferase C (NatC) complex which catalyzes acetylation of N-terminal methionine residues. N-terminal acetylation protects proteins from ubiquitination and degradation by the N-end rule pathway. The chain is N-alpha-acetyltransferase 38, NatC auxiliary subunit (Naa38) from Mus musculus (Mouse).